A 161-amino-acid polypeptide reads, in one-letter code: Protein PLANT CADMIUM RESISTANCE 12 (161 aa).

The chain crosses the membrane as a helical span at residues 71-89; it reads AGLIHLALGFIGCSWLYAF.

The protein belongs to the cornifelin family.

It is found in the membrane. In terms of biological role, may be involved in heavy metals transport. The sequence is that of Protein PLANT CADMIUM RESISTANCE 12 (PCR12) from Arabidopsis thaliana (Mouse-ear cress).